Consider the following 298-residue polypeptide: Adaptation to cold protein C (298 aa).

Interacts with the C-terminal extension of AtcJ. Also interacts with AtcB, but not with AtcA.

Its activity is regulated as follows. Interaction with AtcJ stabilizes AtcC. Its function is as follows. Involved in cold adaptation. The sequence is that of Adaptation to cold protein C from Shewanella oneidensis (strain ATCC 700550 / JCM 31522 / CIP 106686 / LMG 19005 / NCIMB 14063 / MR-1).